The primary structure comprises 276 residues: Formamidopyrimidine-DNA glycosylase (276 aa).

The Schiff-base intermediate with DNA role is filled by proline 2. Glutamate 3 serves as the catalytic Proton donor. The active-site Proton donor; for beta-elimination activity is lysine 58. DNA-binding residues include histidine 92, arginine 111, and lysine 154. An FPG-type zinc finger spans residues 239–273 (QVYGHAGEECSSCGTILEKIKVNGRGTTFCPHCQV). Arginine 263 (proton donor; for delta-elimination activity) is an active-site residue.

The protein belongs to the FPG family. As to quaternary structure, monomer. Zn(2+) serves as cofactor.

It catalyses the reaction Hydrolysis of DNA containing ring-opened 7-methylguanine residues, releasing 2,6-diamino-4-hydroxy-5-(N-methyl)formamidopyrimidine.. The enzyme catalyses 2'-deoxyribonucleotide-(2'-deoxyribose 5'-phosphate)-2'-deoxyribonucleotide-DNA = a 3'-end 2'-deoxyribonucleotide-(2,3-dehydro-2,3-deoxyribose 5'-phosphate)-DNA + a 5'-end 5'-phospho-2'-deoxyribonucleoside-DNA + H(+). Its function is as follows. Involved in base excision repair of DNA damaged by oxidation or by mutagenic agents. Acts as a DNA glycosylase that recognizes and removes damaged bases. Has a preference for oxidized purines, such as 7,8-dihydro-8-oxoguanine (8-oxoG). Has AP (apurinic/apyrimidinic) lyase activity and introduces nicks in the DNA strand. Cleaves the DNA backbone by beta-delta elimination to generate a single-strand break at the site of the removed base with both 3'- and 5'-phosphates. In Lactobacillus gasseri (strain ATCC 33323 / DSM 20243 / BCRC 14619 / CIP 102991 / JCM 1131 / KCTC 3163 / NCIMB 11718 / NCTC 13722 / AM63), this protein is Formamidopyrimidine-DNA glycosylase.